The sequence spans 101 residues: Small ribosomal subunit protein bS18c (101 aa).

Basic residues predominate over residues 1–19 (MDKSKRPFRKSKRSFRRRL). The segment at 1 to 23 (MDKSKRPFRKSKRSFRRRLPPIG) is disordered.

This sequence belongs to the bacterial ribosomal protein bS18 family. Part of the 30S ribosomal subunit.

It localises to the plastid. It is found in the chloroplast. This Ceratophyllum demersum (Rigid hornwort) protein is Small ribosomal subunit protein bS18c.